We begin with the raw amino-acid sequence, 443 residues long: Light-independent protochlorophyllide reductase subunit N (443 aa).

[4Fe-4S] cluster is bound by residues cysteine 15, cysteine 40, and cysteine 99.

Belongs to the BchN/ChlN family. As to quaternary structure, protochlorophyllide reductase is composed of three subunits; BchL, BchN and BchB. Forms a heterotetramer of two BchB and two BchN subunits. Requires [4Fe-4S] cluster as cofactor.

The enzyme catalyses chlorophyllide a + oxidized 2[4Fe-4S]-[ferredoxin] + 2 ADP + 2 phosphate = protochlorophyllide a + reduced 2[4Fe-4S]-[ferredoxin] + 2 ATP + 2 H2O. Its pathway is porphyrin-containing compound metabolism; bacteriochlorophyll biosynthesis (light-independent). Functionally, component of the dark-operative protochlorophyllide reductase (DPOR) that uses Mg-ATP and reduced ferredoxin to reduce ring D of protochlorophyllide (Pchlide) to form chlorophyllide a (Chlide). This reaction is light-independent. The NB-protein (BchN-BchB) is the catalytic component of the complex. The polypeptide is Light-independent protochlorophyllide reductase subunit N (Heliobacterium modesticaldum (strain ATCC 51547 / Ice1)).